The chain runs to 395 residues: Vascular endothelial growth factor A, long form (395 aa).

Disordered stretches follow at residues 1-45 (MTDR…VEGV) and 73-175 (EAEP…AGPG). Low complexity predominate over residues 73–85 (EAEPSGAARSASS). A compositionally biased stretch (acidic residues) spans 91–102 (QPEEGEEEEEKE). Low complexity-rich tracts occupy residues 123 to 143 (AAVC…ARAS) and 165 to 175 (RRGSASRAGPG). Cystine bridges form between Cys-232-Cys-274, Cys-263-Cys-308, and Cys-267-Cys-310. Asn-281 is a glycosylation site (N-linked (GlcNAc...) asparagine). Residues 314-323 (KDRARQEKKS) are compositionally biased toward basic and acidic residues. The interval 314 to 344 (KDRARQEKKSVRGKGKGQKRKRKKSRYKSWS) is disordered. Over residues 324–340 (VRGKGKGQKRKRKKSRY) the composition is skewed to basic residues.

The protein belongs to the PDGF/VEGF growth factor family. In terms of assembly, homodimer; disulfide-linked. Also found as heterodimer with PGF. Interacts with NRP1. Interacts with isoform 2 of BSG. Interacts with CD82; this interaction inhibits VEGFA-mediated signaling pathway. In terms of processing, produced by use of an alternative upstream CUG codon and post-translationally processed into the N-terminal N-VEGF form and the C-terminal secreted VEGFA form. Higher expression in pituitary tumors than the pituitary gland. As to expression, widely expressed. In terms of tissue distribution, not widely expressed.

It localises to the cytoplasm. Its subcellular location is the nucleus. The protein resides in the secreted. The protein localises to the endoplasmic reticulum. It is found in the golgi apparatus. It localises to the extracellular space. Its subcellular location is the extracellular matrix. In terms of biological role, participates in the induction of key genes involved in the response to hypoxia and in the induction of angiogenesis such as HIF1A. Involved in protecting cells from hypoxia-mediated cell death. Its function is as follows. Growth factor active in angiogenesis, vasculogenesis and endothelial cell growth. Induces endothelial cell proliferation, promotes cell migration, inhibits apoptosis and induces permeabilization of blood vessels. Binds to the FLT1/VEGFR1 and KDR/VEGFR2 receptors, heparan sulfate and heparin. Binds to the NRP1/neuropilin-1 receptor. Binding to NRP1 initiates a signaling pathway needed for motor neuron axon guidance and cell body migration, including for the caudal migration of facial motor neurons from rhombomere 4 to rhombomere 6 during embryonic development. Also binds the DEAR/FBXW7-AS1 receptor. Binds to the KDR receptor but does not activate downstream signaling pathways, does not activate angiogenesis and inhibits tumor growth. The protein is Vascular endothelial growth factor A, long form (VEGFA) of Homo sapiens (Human).